The following is a 362-amino-acid chain: Homeobox protein extradenticle (362 aa).

A PBC domain is found at 34–225 (PRKQDIGEIL…VMILRSRFLD (192 aa)). Residues 41-120 (EILQQIMNIT…EGVAGPEKGG (80 aa)) form a PBC-A region. The interval 123 to 225 (DFLSQSDLTG…VMILRSRFLD (103 aa)) is PBC-B. Positions 226–288 (ARRKRRNFSK…NKRIRYKKNI (63 aa)) form a DNA-binding region, homeobox; TALE-type. Residues 305–362 (GASPYSMGGPPSGAATPMMSPAPAQDSMGYSLGSGGYDQQQPYDGSMGYDQLHQDLSP) form a disordered region.

Belongs to the TALE/PBX homeobox family.

It is found in the nucleus. Its function is as follows. Transcription factor which acts with the selector homeodomain proteins altering the regulation of downstream target genes such as wingless (wg), teashirt (tsh) and decapentaplegic (dpp), thus affecting segmental identity. This Anopheles gambiae (African malaria mosquito) protein is Homeobox protein extradenticle.